A 515-amino-acid chain; its full sequence is Probable cytosol aminopeptidase (515 aa).

Mn(2+)-binding residues include lysine 279 and aspartate 284. Lysine 291 is an active-site residue. Residues aspartate 302, aspartate 361, and glutamate 363 each contribute to the Mn(2+) site. Residue arginine 365 is part of the active site.

It belongs to the peptidase M17 family. It depends on Mn(2+) as a cofactor.

It is found in the cytoplasm. The enzyme catalyses Release of an N-terminal amino acid, Xaa-|-Yaa-, in which Xaa is preferably Leu, but may be other amino acids including Pro although not Arg or Lys, and Yaa may be Pro. Amino acid amides and methyl esters are also readily hydrolyzed, but rates on arylamides are exceedingly low.. It catalyses the reaction Release of an N-terminal amino acid, preferentially leucine, but not glutamic or aspartic acids.. Functionally, presumably involved in the processing and regular turnover of intracellular proteins. Catalyzes the removal of unsubstituted N-terminal amino acids from various peptides. This is Probable cytosol aminopeptidase from Mycobacterium tuberculosis (strain ATCC 25177 / H37Ra).